A 405-amino-acid chain; its full sequence is Adenosylhomocysteinase (405 aa).

Asp113 and Glu138 together coordinate substrate. An NAD(+)-binding site is contributed by 139–141 (TTT). Residues Lys168 and Asp172 each coordinate substrate. NAD(+) contacts are provided by residues Asn173, 202–207 (GYGWCG), Glu225, Asn260, 281–283 (AGH), and Asn327.

Belongs to the adenosylhomocysteinase family. Requires NAD(+) as cofactor.

It is found in the cytoplasm. It carries out the reaction S-adenosyl-L-homocysteine + H2O = L-homocysteine + adenosine. Its pathway is amino-acid biosynthesis; L-homocysteine biosynthesis; L-homocysteine from S-adenosyl-L-homocysteine: step 1/1. May play a key role in the regulation of the intracellular concentration of adenosylhomocysteine. The polypeptide is Adenosylhomocysteinase (Archaeoglobus fulgidus (strain ATCC 49558 / DSM 4304 / JCM 9628 / NBRC 100126 / VC-16)).